Reading from the N-terminus, the 566-residue chain is Protein downstream neighbor of Son (566 aa).

The interval 1–110 (MALSVPGYSP…QPEAPVPFLD (110 aa)) is disordered. Phosphoserine occurs at positions 28 and 34. The span at 62–72 (GGRGGGSGGGP) shows a compositional bias: gly residues. The span at 73–82 (AAARRNPFAR) shows a compositional bias: low complexity.

The protein belongs to the DONSON family. In terms of assembly, component of the replisome complex composed of at least DONSON, MCM2, MCM7, PCNA and TICRR; interaction at least with PCNA occurs during DNA replication. Expressed in the brain, with higher levels in prenatal compared to adult brain.

The protein resides in the nucleus. In terms of biological role, replisome component that maintains genome stability by protecting stalled or damaged replication forks. After the induction of replication stress, required for the stabilization of stalled replication forks, the efficient activation of the intra-S-phase and G/2M cell-cycle checkpoints and the maintenance of genome stability. This Homo sapiens (Human) protein is Protein downstream neighbor of Son (DONSON).